The primary structure comprises 178 residues: Chorion class high-cysteine HCB protein 13 (178 aa).

An N-terminal signal peptide occupies residues 1–21 (MAAKLILFVCAIALVAQSVLG). Positions 22–46 (TGCGCCCRGCGCGCGGCGSRCCDRF) are left arm. Positions 47–110 (CLCSNSAAPT…GDGCVGITQS (64 aa)) are central domain. Residues 111-178 (CGGCGCGCGG…GCGCGGCGCC (68 aa)) are right arm (Gly-rich tandem repeats).

This sequence belongs to the chorion protein family.

In terms of biological role, this protein is one of many from the eggshell of the silk moth. The chain is Chorion class high-cysteine HCB protein 13 from Bombyx mori (Silk moth).